Reading from the N-terminus, the 522-residue chain is Involucrin (522 aa).

Residues 1–15 are compositionally biased toward polar residues; it reads MSQQHTLPVTLSPAL. Disordered regions lie at residues 1–126, 159–329, and 366–496; these read MSQQ…LEEE, QEGQ…LVQQ, and QEGQ…QPVL. The span at 76 to 91 shows a compositional bias: low complexity; that stretch reads EQQQQEPQEQELQQQH. A compositionally biased stretch (basic and acidic residues) spans 92–126; it reads WEQHEEHQKAENPEQQLKQEKAQRDQQLNEHLEEE. A compositionally biased stretch (low complexity) spans 169–181; that stretch reads QEGQLELPEQQEG. Composition is skewed to basic and acidic residues over residues 182–198, 214–231, 252–264, 274–290, and 305–323; these read QLEH…HLDQ, KHLE…HQKG, QLKH…KQPE, KHLE…EHQE, and QLEE…EGQL. Residues 375–389 are compositionally biased toward low complexity; it reads QQQGQLEVSEQQVGQ. 3 stretches are compositionally biased toward basic and acidic residues: residues 391–401, 409–418, and 431–465; these read KHLEQEGKQLE, QLKHLEKQEA, and KHPE…DLEQ. Residues 466-479 are compositionally biased toward low complexity; it reads QKGQLEQQQGQLEQ.

It belongs to the involucrin family. As to quaternary structure, directly or indirectly cross-linked to cornifelin (CNFN). In terms of processing, substrate of transglutaminase. Specific glutamines or lysines are cross-linked to keratins, desmoplakin and to inter involucrin molecules. In terms of tissue distribution, keratinocytes of epidermis and other stratified squamous epithelia.

It is found in the cytoplasm. Functionally, part of the insoluble cornified cell envelope (CE) of stratified squamous epithelia. This is Involucrin (IVL) from Hylobates lar (Lar gibbon).